The following is a 393-amino-acid chain: Formate-dependent phosphoribosylglycinamide formyltransferase (393 aa).

Residues 22–23 (EL) and Glu82 contribute to the N(1)-(5-phospho-beta-D-ribosyl)glycinamide site. Residues Arg114, Lys155, 160 to 165 (SSGKGQ), 195 to 198 (EGLV), and Glu203 contribute to the ATP site. An ATP-grasp domain is found at 119–308 (RLAAETLQLP…EFALHVRAFL (190 aa)). 2 residues coordinate Mg(2+): Glu267 and Glu279. Residues Asp286, Lys355, and 362-363 (RR) each bind N(1)-(5-phospho-beta-D-ribosyl)glycinamide.

Belongs to the PurK/PurT family. As to quaternary structure, homodimer.

The catalysed reaction is N(1)-(5-phospho-beta-D-ribosyl)glycinamide + formate + ATP = N(2)-formyl-N(1)-(5-phospho-beta-D-ribosyl)glycinamide + ADP + phosphate + H(+). It functions in the pathway purine metabolism; IMP biosynthesis via de novo pathway; N(2)-formyl-N(1)-(5-phospho-D-ribosyl)glycinamide from N(1)-(5-phospho-D-ribosyl)glycinamide (formate route): step 1/1. In terms of biological role, involved in the de novo purine biosynthesis. Catalyzes the transfer of formate to 5-phospho-ribosyl-glycinamide (GAR), producing 5-phospho-ribosyl-N-formylglycinamide (FGAR). Formate is provided by PurU via hydrolysis of 10-formyl-tetrahydrofolate. The chain is Formate-dependent phosphoribosylglycinamide formyltransferase from Yersinia pseudotuberculosis serotype O:3 (strain YPIII).